A 224-amino-acid polypeptide reads, in one-letter code: MKLEYNRIIDSTLLKADTLPHEIDALCADAHKYQFYAVCVNPSYVRYAKNILKGTGVKLCTVVGFPLGQTTQRQKVYETKIAIKEGADEIDMVMNIAEFKKRCACVISEIRAVKKVCGKRTLKVIIETALLNQDEIRDAVNVCIDGNADFVKTSTGFSMRGASLEDITIMREASGNLIKIKASGGVQTAQQFLDFFNAGVSRIGTSNAVKIMEELHKLESHEHR.

The Proton donor/acceptor role is filled by aspartate 91. Lysine 152 functions as the Schiff-base intermediate with acetaldehyde in the catalytic mechanism. Lysine 181 acts as the Proton donor/acceptor in catalysis.

The protein belongs to the DeoC/FbaB aldolase family. DeoC type 1 subfamily.

Its subcellular location is the cytoplasm. It catalyses the reaction 2-deoxy-D-ribose 5-phosphate = D-glyceraldehyde 3-phosphate + acetaldehyde. Its pathway is carbohydrate degradation; 2-deoxy-D-ribose 1-phosphate degradation; D-glyceraldehyde 3-phosphate and acetaldehyde from 2-deoxy-alpha-D-ribose 1-phosphate: step 2/2. Its function is as follows. Catalyzes a reversible aldol reaction between acetaldehyde and D-glyceraldehyde 3-phosphate to generate 2-deoxy-D-ribose 5-phosphate. This chain is Deoxyribose-phosphate aldolase, found in Mycoplasma pneumoniae (strain ATCC 29342 / M129 / Subtype 1) (Mycoplasmoides pneumoniae).